The following is a 750-amino-acid chain: Small G protein signaling modulator 3 (750 aa).

The region spanning 114-305 (GIPHGMRPQL…RIWDLFFYEG (192 aa)) is the Rab-GAP TBC domain. Residue serine 406 is modified to Phosphoserine. A coiled-coil region spans residues 415–439 (EDDLEALKAKNIKQTELVADLREAI). Residues 480–539 (SHRRRAKALLDFERHDDDELGFRKNDIITIISQKDEHCWVGELNGLRGWFPAKFVEVLDE) form the SH3 domain. Positions 555-718 (GVTDLVRGTL…FAFSLSQDWE (164 aa)) constitute an RUN domain.

This sequence belongs to the small G protein signaling modulator family. Interacts with GJA1. Interaction with GJA1 induces its degradation. Interacts via its RUN domain with the C-terminal region of NF2. Interacts with RAB3A, RAB4A, RAB5A, RAB8A, RAB11A, RAP1A, RAP1B, RAP2A, RAP2B and PDCD6I. No interaction with RAB27A. In terms of tissue distribution, widely expressed.

It is found in the cytoplasm. Its function is as follows. May play a cooperative role in NF2-mediated growth suppression of cells. The sequence is that of Small G protein signaling modulator 3 from Mus musculus (Mouse).